A 78-amino-acid chain; its full sequence is Large ribosomal subunit protein bL28 (78 aa).

Belongs to the bacterial ribosomal protein bL28 family.

This is Large ribosomal subunit protein bL28 from Flavobacterium johnsoniae (strain ATCC 17061 / DSM 2064 / JCM 8514 / BCRC 14874 / CCUG 350202 / NBRC 14942 / NCIMB 11054 / UW101) (Cytophaga johnsonae).